The following is a 327-amino-acid chain: ATP-dependent 6-phosphofructokinase (327 aa).

Residues glycine 11, 72-73 (RS), and 102-105 (GDGS) each bind ATP. Position 103 (aspartate 103) interacts with Mg(2+). A substrate-binding site is contributed by 127 to 129 (TID). Aspartate 129 (proton acceptor) is an active-site residue. Residue arginine 156 coordinates ADP. Substrate-binding positions include arginine 164 and 171–173 (MGR). 187–189 (GAE) is a binding site for ADP. Substrate contacts are provided by residues glutamate 224, arginine 245, and 251 to 254 (HIQR).

It belongs to the phosphofructokinase type A (PFKA) family. ATP-dependent PFK group I subfamily. Prokaryotic clade 'B1' sub-subfamily. In terms of assembly, homotetramer. The cofactor is Mg(2+).

The protein localises to the cytoplasm. It carries out the reaction beta-D-fructose 6-phosphate + ATP = beta-D-fructose 1,6-bisphosphate + ADP + H(+). The protein operates within carbohydrate degradation; glycolysis; D-glyceraldehyde 3-phosphate and glycerone phosphate from D-glucose: step 3/4. With respect to regulation, allosterically activated by ADP and other diphosphonucleosides, and allosterically inhibited by phosphoenolpyruvate. Catalyzes the phosphorylation of D-fructose 6-phosphate to fructose 1,6-bisphosphate by ATP, the first committing step of glycolysis. The polypeptide is ATP-dependent 6-phosphofructokinase (Sulfurovum sp. (strain NBC37-1)).